The following is a 504-amino-acid chain: Activin receptor type-1 (504 aa).

Residues 1 to 16 (MALPVLLLLLALPSRS) form the signal peptide. Residues 17 to 119 (VQDEELKLNE…EAAGYSMETL (103 aa)) are Extracellular-facing. Residue asparagine 94 is glycosylated (N-linked (GlcNAc...) asparagine). Residues 120–140 (IIVILAPVVVLVIFSVVAVLI) form a helical membrane-spanning segment. Over 141–504 (IRRIQKNHME…NSLDKLKADC (364 aa)) the chain is Cytoplasmic. The GS domain maps to 173 to 202 (STLADLLDHSCTSGSGSGLPFLVQRTVARQ). Residues 203 to 497 (ITLVECVGKG…KTLTKIDNSL (295 aa)) enclose the Protein kinase domain. Residues 209–217 (VGKGRYGEV) and lysine 230 contribute to the ATP site. Aspartate 331 serves as the catalytic Proton acceptor.

This sequence belongs to the protein kinase superfamily. TKL Ser/Thr protein kinase family. TGFB receptor subfamily. Requires Mg(2+) as cofactor. Mn(2+) is required as a cofactor.

It is found in the membrane. The catalysed reaction is L-threonyl-[receptor-protein] + ATP = O-phospho-L-threonyl-[receptor-protein] + ADP + H(+). The enzyme catalyses L-seryl-[receptor-protein] + ATP = O-phospho-L-seryl-[receptor-protein] + ADP + H(+). In terms of biological role, on ligand binding, forms a receptor complex consisting of two type II and two type I transmembrane serine/threonine kinases. Type II receptors phosphorylate and activate type I receptors which autophosphorylate, then bind and activate SMAD transcriptional regulators. Receptor for activin. The sequence is that of Activin receptor type-1 (ACVR1) from Gallus gallus (Chicken).